Here is a 1405-residue protein sequence, read N- to C-terminus: DNA-directed RNA polymerase subunit beta' (1405 aa).

Cys70, Cys72, Cys85, and Cys88 together coordinate Zn(2+). 3 residues coordinate Mg(2+): Asp460, Asp462, and Asp464. Residues Cys815, Cys890, Cys897, and Cys900 each contribute to the Zn(2+) site. A disordered region spans residues 1375–1405 (GLTDSEMETLSGKPAGAEPVAALADAGADEE).

This sequence belongs to the RNA polymerase beta' chain family. In terms of assembly, the RNAP catalytic core consists of 2 alpha, 1 beta, 1 beta' and 1 omega subunit. When a sigma factor is associated with the core the holoenzyme is formed, which can initiate transcription. Mg(2+) is required as a cofactor. It depends on Zn(2+) as a cofactor.

It carries out the reaction RNA(n) + a ribonucleoside 5'-triphosphate = RNA(n+1) + diphosphate. DNA-dependent RNA polymerase catalyzes the transcription of DNA into RNA using the four ribonucleoside triphosphates as substrates. This Xanthomonas oryzae pv. oryzae (strain MAFF 311018) protein is DNA-directed RNA polymerase subunit beta'.